The primary structure comprises 200 residues: Lipid A acyltransferase PagP (200 aa).

Positions 1-24 (MRLKLTSHTCLFALSSLLVTPAFA) are cleaved as a signal peptide. Active-site residues include His72, Asp115, and Ser116.

Belongs to the lipid A palmitoyltransferase family. Homodimer.

Its subcellular location is the cell outer membrane. It carries out the reaction a lipid A + a 1,2-diacyl-sn-glycero-3-phosphocholine = a hepta-acyl lipid A + a 2-acyl-sn-glycero-3-phosphocholine. The catalysed reaction is a lipid IVA + a 1,2-diacyl-sn-glycero-3-phosphocholine = a lipid IVB + a 2-acyl-sn-glycero-3-phosphocholine. The enzyme catalyses a lipid IIA + a 1,2-diacyl-sn-glycero-3-phosphocholine = a lipid IIB + a 2-acyl-sn-glycero-3-phosphocholine. Its function is as follows. Transfers a fatty acid residue from the sn-1 position of a phospholipid to the N-linked hydroxyfatty acid chain on the proximal unit of lipid A or its precursors. This is Lipid A acyltransferase PagP from Dickeya dadantii (strain 3937) (Erwinia chrysanthemi (strain 3937)).